A 535-amino-acid chain; its full sequence is Ribonuclease Y (535 aa).

Residues isoleucine 4 to isoleucine 24 form a helical membrane-spanning segment. The interval glutamate 118 to isoleucine 141 is disordered. Residues threonine 225–leucine 285 form the KH domain. The HD domain occupies valine 351–alanine 444.

The protein belongs to the RNase Y family.

The protein resides in the cell membrane. Its function is as follows. Endoribonuclease that initiates mRNA decay. In Streptococcus pyogenes serotype M2 (strain MGAS10270), this protein is Ribonuclease Y.